The primary structure comprises 1193 residues: Kinesin-related protein 3 (1193 aa).

Residues 3–329 enclose the Kinesin motor domain; that stretch reads SIRVVCRFRP…LRFGSRAKNI (327 aa). Position 85-92 (85-92) interacts with ATP; it reads GQTGSGKT. Disordered stretches follow at residues 377–429, 573–600, 611–630, 638–665, 973–1016, 1032–1114, and 1127–1193; these read KSSG…SSNV, SSIA…KHAD, LLQR…TATS, ISES…ATSS, GGGG…SANL, KAEP…PVKI, and FKKK…QQKD. Residues 405–429 are compositionally biased toward low complexity; the sequence is SSNLSNSVNSTSNLNTSSNTSSSNV. Positions 450 to 962 form a coiled coil; that stretch reads ELIKVLQEKC…SQVGVDAQNT (513 aa). Polar residues-rich tracts occupy residues 573-585 and 614-630; these read SSIA…TPKS and RTPS…TATS. Composition is skewed to low complexity over residues 643–665 and 985–1006; these read NIGS…ATSS and HSSS…NNNH. Polar residues predominate over residues 1007–1016; the sequence is TTPTPLSANL. 3 stretches are compositionally biased toward low complexity: residues 1044–1078, 1086–1109, and 1132–1149; these read NTSI…IGNS, NNNS…LNGN, and PSST…QSPQ. Polar residues-rich tracts occupy residues 1150-1165 and 1174-1193; these read TPSH…ISPN and FSYT…QQKD.

It belongs to the TRAFAC class myosin-kinesin ATPase superfamily. Kinesin family. Kinesin subfamily. Dimer.

The protein localises to the cytoplasm. Its subcellular location is the cytoskeleton. Functionally, microtubule-associated force-producing protein that plays a role in organelle transport. Its motor activity is directed toward the microtubule's plus end. The maximal velocity in an inverted motility assay (moving microtubules on fixed motors) was 1.96 um/s. The protein is Kinesin-related protein 3 (kif3) of Dictyostelium discoideum (Social amoeba).